A 427-amino-acid polypeptide reads, in one-letter code: Glucose-6-phosphate isomerase (427 aa).

The active-site Proton donor is the E281. Residues H302 and K417 contribute to the active site.

This sequence belongs to the GPI family.

The protein resides in the cytoplasm. The enzyme catalyses alpha-D-glucose 6-phosphate = beta-D-fructose 6-phosphate. It functions in the pathway carbohydrate biosynthesis; gluconeogenesis. The protein operates within carbohydrate degradation; glycolysis; D-glyceraldehyde 3-phosphate and glycerone phosphate from D-glucose: step 2/4. In terms of biological role, catalyzes the reversible isomerization of glucose-6-phosphate to fructose-6-phosphate. In Mycoplasmopsis pulmonis (strain UAB CTIP) (Mycoplasma pulmonis), this protein is Glucose-6-phosphate isomerase.